Reading from the N-terminus, the 514-residue chain is ATP synthase subunit alpha (514 aa).

Position 170–177 (170–177) interacts with ATP; sequence GDRQIGKT.

This sequence belongs to the ATPase alpha/beta chains family. As to quaternary structure, F-type ATPases have 2 components, CF(1) - the catalytic core - and CF(0) - the membrane proton channel. CF(1) has five subunits: alpha(3), beta(3), gamma(1), delta(1), epsilon(1). CF(0) has three main subunits: a(1), b(2) and c(9-12). The alpha and beta chains form an alternating ring which encloses part of the gamma chain. CF(1) is attached to CF(0) by a central stalk formed by the gamma and epsilon chains, while a peripheral stalk is formed by the delta and b chains.

Its subcellular location is the cell inner membrane. The catalysed reaction is ATP + H2O + 4 H(+)(in) = ADP + phosphate + 5 H(+)(out). In terms of biological role, produces ATP from ADP in the presence of a proton gradient across the membrane. The alpha chain is a regulatory subunit. This chain is ATP synthase subunit alpha, found in Pseudomonas aeruginosa (strain LESB58).